The primary structure comprises 246 residues: UDP-N-acetyl-D-mannosaminuronic acid transferase (246 aa).

Belongs to the glycosyltransferase 26 family.

It catalyses the reaction UDP-N-acetyl-alpha-D-mannosaminouronate + N-acetyl-alpha-D-glucosaminyl-di-trans,octa-cis-undecaprenyl diphosphate = beta-D-ManNAcA-(1-&gt;4)-alpha-D-GlcNAc-di-trans,octa-cis-undecaprenyl diphosphate + UDP + H(+). Its pathway is bacterial outer membrane biogenesis; enterobacterial common antigen biosynthesis. Its function is as follows. Catalyzes the synthesis of Und-PP-GlcNAc-ManNAcA (Lipid II), the second lipid-linked intermediate involved in enterobacterial common antigen (ECA) synthesis. This is UDP-N-acetyl-D-mannosaminuronic acid transferase from Salmonella paratyphi A (strain ATCC 9150 / SARB42).